The primary structure comprises 109 residues: Putative double-stranded DNA mimic protein YciU (109 aa).

This sequence belongs to the putative dsDNA mimic protein family.

In terms of biological role, may act as a double-stranded DNA (dsDNA) mimic. Probably regulates the activity of a dsDNA-binding protein. The polypeptide is Putative double-stranded DNA mimic protein YciU (Salmonella choleraesuis (strain SC-B67)).